The following is a 162-amino-acid chain: NADH-quinone oxidoreductase subunit I (162 aa).

2 consecutive 4Fe-4S ferredoxin-type domains span residues 54–83 and 93–122; these read RRYENGEERCIACKLCEAVCPALAITIESE and TRYDIDLTKCIFCGFCEESCPVDSIVETQI. [4Fe-4S] cluster contacts are provided by cysteine 63, cysteine 66, cysteine 69, cysteine 73, cysteine 102, cysteine 105, cysteine 108, and cysteine 112.

It belongs to the complex I 23 kDa subunit family. In terms of assembly, NDH-1 is composed of 14 different subunits. Subunits NuoA, H, J, K, L, M, N constitute the membrane sector of the complex. It depends on [4Fe-4S] cluster as a cofactor.

The protein localises to the cell inner membrane. It catalyses the reaction a quinone + NADH + 5 H(+)(in) = a quinol + NAD(+) + 4 H(+)(out). Its function is as follows. NDH-1 shuttles electrons from NADH, via FMN and iron-sulfur (Fe-S) centers, to quinones in the respiratory chain. The immediate electron acceptor for the enzyme in this species is believed to be ubiquinone. Couples the redox reaction to proton translocation (for every two electrons transferred, four hydrogen ions are translocated across the cytoplasmic membrane), and thus conserves the redox energy in a proton gradient. This Burkholderia mallei (strain NCTC 10247) protein is NADH-quinone oxidoreductase subunit I.